The chain runs to 95 residues: Putative septation protein SpoVG (95 aa).

Belongs to the SpoVG family.

Functionally, could be involved in septation. The sequence is that of Putative septation protein SpoVG from Clostridium botulinum (strain ATCC 19397 / Type A).